The primary structure comprises 336 residues: Polyprenyl transferase dpasC (336 aa).

The helical transmembrane segment at 34–54 (LFTIFAGGMFLFVASFPTTAF) threads the bilayer. An N-linked (GlcNAc...) asparagine glycan is attached at Asn-66. The next 7 membrane-spanning stretches (helical) occupy residues 80–100 (ALCLSACYSFCGAGMVWNDWI), 125–145 (QAMLWMVFQMAVSWWLLHFML), 181–201 (YILGFTIAWPAVPGRTAIFHG), 205–225 (FAESVQACMPLLNMVFFWTIF), 253–273 (HVHLLLCLLLVPVAVCVPMYL), 274–294 (NQFHSTWLWVSWAGVWALSLL), and 311–331 (LHVDNFLLGAWTVVACTIELL).

This sequence belongs to the UbiA prenyltransferase family. Mg(2+) is required as a cofactor.

The protein resides in the membrane. It participates in secondary metabolite biosynthesis; terpenoid biosynthesis. Its function is as follows. Polyprenyl transferase; part of the gene cluster that mediates the biosynthesis of the diterpenoid pyrones subglutinols A and B. The first step of the pathway is the synthesis of the alpha-pyrone moiety by the polyketide synthase dpasA via condensation of one acetyl-CoA starter unit with 3 malonyl-CoA units and 2 methylations. The alpha-pyrone is then combined with geranylgeranyl pyrophosphate (GGPP) formed by the GGPP synthase dpasD through the action of the prenyltransferase dpasC to yield a linear alpha-pyrone diterpenoid. Subsequent steps in the diterpenoid pyrone biosynthetic pathway involve the decalin core formation, which is initiated by the epoxidation of the C10-C11 olefin by the FAD-dependent oxidoreductase dpasE, and is followed by a cyclization cascade catalyzed by the terpene cyclase dpasB. The FAD-linked oxidoreductase dpasF is then involved in tetrahydrofuran (THF) ring formation at the C5 unit to complete the formation of subglutinols A and B. DpasF possesses also an additional catalytic ability of multi-step oxidations to generate a new DDP analog with an enone system at the C5 named FDDP A. This chain is Polyprenyl transferase dpasC, found in Apiospora sacchari (Arthrinium sacchari).